The sequence spans 188 residues: MASYGMNDVKNGMKILVNNQPAVIIDTEYVKPGKGQAFTRVKYRLIKDGRTQEVTMKSTDSLDAADVVDTDMNFMYSDGEYWHFMDPESFEQVQATKAGMGGAEKWLKGEESCVVTLWNGEPIFVQPPNFVELKITETDPGVRGDTSGGGGKPATLETGAVVRVPLFVNQDEVIRVDTRSGEYSARVK.

Lys34 is subject to N6-(3,6-diaminohexanoyl)-5-hydroxylysine.

Belongs to the elongation factor P family. In terms of processing, may be beta-lysylated on the epsilon-amino group of Lys-34 by the combined action of EpmA and EpmB, and then hydroxylated on the C5 position of the same residue by EpmC (if this protein is present). Lysylation is critical for the stimulatory effect of EF-P on peptide-bond formation. The lysylation moiety may extend toward the peptidyltransferase center and stabilize the terminal 3-CCA end of the tRNA. Hydroxylation of the C5 position on Lys-34 may allow additional potential stabilizing hydrogen-bond interactions with the P-tRNA.

The protein resides in the cytoplasm. It participates in protein biosynthesis; polypeptide chain elongation. Functionally, involved in peptide bond synthesis. Alleviates ribosome stalling that occurs when 3 or more consecutive Pro residues or the sequence PPG is present in a protein, possibly by augmenting the peptidyl transferase activity of the ribosome. Modification of Lys-34 is required for alleviation. This is Elongation factor P from Stenotrophomonas maltophilia (strain K279a).